The following is a 310-amino-acid chain: 4-hydroxyproline 2-epimerase (310 aa).

Residue Cys-88 is the Proton acceptor of the active site. Residues 89–90, His-208, and Asp-232 each bind substrate; that span reads GH. Cys-236 (proton donor) is an active-site residue. 237-238 lines the substrate pocket; it reads GT.

Belongs to the proline racemase family.

It carries out the reaction trans-4-hydroxy-L-proline = cis-4-hydroxy-D-proline. Catalyzes the epimerization of trans-4-hydroxy-L-proline (t4LHyp) to cis-4-hydroxy-D-proline (c4DHyp). Is likely involved in a degradation pathway that converts t4LHyp to alpha-ketoglutarate. Can also catalyze the dehydration of trans-3-hydroxy-L-proline (t3LHyp) to Delta(1)-pyrroline-2-carboxylate (Pyr2C), albeit with 42-fold lower efficiency. Displays no proline racemase activity. The protein is 4-hydroxyproline 2-epimerase of Burkholderia thailandensis (strain ATCC 700388 / DSM 13276 / CCUG 48851 / CIP 106301 / E264).